We begin with the raw amino-acid sequence, 413 residues long: Serine hydroxymethyltransferase (413 aa).

(6S)-5,6,7,8-tetrahydrofolate contacts are provided by residues Leu117 and 121 to 123; that span reads GHL. Lys226 bears the N6-(pyridoxal phosphate)lysine mark. (6S)-5,6,7,8-tetrahydrofolate is bound by residues Glu239 and 349–351; that span reads SPF.

The protein belongs to the SHMT family. As to quaternary structure, homodimer. Pyridoxal 5'-phosphate is required as a cofactor.

The protein resides in the cytoplasm. The enzyme catalyses (6R)-5,10-methylene-5,6,7,8-tetrahydrofolate + glycine + H2O = (6S)-5,6,7,8-tetrahydrofolate + L-serine. It functions in the pathway one-carbon metabolism; tetrahydrofolate interconversion. The protein operates within amino-acid biosynthesis; glycine biosynthesis; glycine from L-serine: step 1/1. Catalyzes the reversible interconversion of serine and glycine with tetrahydrofolate (THF) serving as the one-carbon carrier. This reaction serves as the major source of one-carbon groups required for the biosynthesis of purines, thymidylate, methionine, and other important biomolecules. Also exhibits THF-independent aldolase activity toward beta-hydroxyamino acids, producing glycine and aldehydes, via a retro-aldol mechanism. The protein is Serine hydroxymethyltransferase of Bacillus cereus (strain G9842).